The following is a 430-amino-acid chain: Enolase (430 aa).

Q167 is a binding site for (2R)-2-phosphoglycerate. The active-site Proton donor is E209. 3 residues coordinate Mg(2+): D245, E286, and D313. Residues K338, R367, S368, and K389 each coordinate (2R)-2-phosphoglycerate. K338 functions as the Proton acceptor in the catalytic mechanism.

Belongs to the enolase family. It depends on Mg(2+) as a cofactor.

It is found in the cytoplasm. The protein resides in the secreted. Its subcellular location is the cell surface. The catalysed reaction is (2R)-2-phosphoglycerate = phosphoenolpyruvate + H2O. The protein operates within carbohydrate degradation; glycolysis; pyruvate from D-glyceraldehyde 3-phosphate: step 4/5. In terms of biological role, catalyzes the reversible conversion of 2-phosphoglycerate (2-PG) into phosphoenolpyruvate (PEP). It is essential for the degradation of carbohydrates via glycolysis. The polypeptide is Enolase (Synechococcus sp. (strain CC9311)).